A 481-amino-acid chain; its full sequence is 3-isopropylmalate dehydratase large subunit (481 aa).

Residues Cys363, Cys423, and Cys426 each coordinate [4Fe-4S] cluster. Positions Gly437–Pro463 are disordered.

The protein belongs to the aconitase/IPM isomerase family. LeuC type 1 subfamily. Heterodimer of LeuC and LeuD. It depends on [4Fe-4S] cluster as a cofactor.

The enzyme catalyses (2R,3S)-3-isopropylmalate = (2S)-2-isopropylmalate. It functions in the pathway amino-acid biosynthesis; L-leucine biosynthesis; L-leucine from 3-methyl-2-oxobutanoate: step 2/4. Its function is as follows. Catalyzes the isomerization between 2-isopropylmalate and 3-isopropylmalate, via the formation of 2-isopropylmaleate. The protein is 3-isopropylmalate dehydratase large subunit of Salinispora arenicola (strain CNS-205).